We begin with the raw amino-acid sequence, 336 residues long: Ribose-phosphate pyrophosphokinase (336 aa).

ATP is bound by residues 43–45 (DQE) and 102–103 (RQ). Positions 136 and 178 each coordinate Mg(2+). Residue lysine 201 is part of the active site. Residues arginine 203, aspartate 227, and 231 to 235 (DTAGT) each bind D-ribose 5-phosphate.

It belongs to the ribose-phosphate pyrophosphokinase family. Class I subfamily. Homohexamer. Requires Mg(2+) as cofactor.

The protein localises to the cytoplasm. It catalyses the reaction D-ribose 5-phosphate + ATP = 5-phospho-alpha-D-ribose 1-diphosphate + AMP + H(+). Its pathway is metabolic intermediate biosynthesis; 5-phospho-alpha-D-ribose 1-diphosphate biosynthesis; 5-phospho-alpha-D-ribose 1-diphosphate from D-ribose 5-phosphate (route I): step 1/1. Involved in the biosynthesis of the central metabolite phospho-alpha-D-ribosyl-1-pyrophosphate (PRPP) via the transfer of pyrophosphoryl group from ATP to 1-hydroxyl of ribose-5-phosphate (Rib-5-P). The polypeptide is Ribose-phosphate pyrophosphokinase (Cereibacter sphaeroides (strain KD131 / KCTC 12085) (Rhodobacter sphaeroides)).